The primary structure comprises 201 residues: UPF0301 protein MSMEG_6921/MSMEI_6732 (201 aa).

This sequence belongs to the UPF0301 (AlgH) family.

The sequence is that of UPF0301 protein MSMEG_6921/MSMEI_6732 from Mycolicibacterium smegmatis (strain ATCC 700084 / mc(2)155) (Mycobacterium smegmatis).